We begin with the raw amino-acid sequence, 736 residues long: Na(+)/H(+) antiporter NhaA (736 aa).

The na(+)/H(+) antiporter NhaA stretch occupies residues 1–387; sequence MNHSPQSARP…ICGYLLLRAA (387 aa). Helical transmembrane passes span 23–43, 58–78, 96–116, 126–146, 155–175, 178–198, 201–221, 224–244, 265–285, 298–318, 334–354, and 367–387; these read AGGITLMAAAALALIVANSPF, LSLAHWINDALMAIFFLLVGL, MLPGIAAAGGVILPAIIFAVL, GWAVPSATDIAFALGVLSLLG, VFLATLAILDDLAAVVIIAIF, AEISMPYLGAAFITAAVLFVM, MGVVKLLPYLISAVILWFFVF, GVHATVAGVVAALMIPLKPAP, VAFIVVPIFGFANAGISFKGL, ILLGLFLGKQFGVFGAAWLAI, LYGVAILCGIGFTMSIFIGLL, and IGVLSGSALSAICGYLLLRAA. The peptidase S49 stretch occupies residues 388 to 736; that stretch reads RPDQSAANPL…EKAIWARYGL (349 aa).

In the N-terminal section; belongs to the NhaA Na(+)/H(+) (TC 2.A.33) antiporter family. It in the C-terminal section; belongs to the peptidase S49 family.

The protein resides in the cell inner membrane. The catalysed reaction is Na(+)(in) + 2 H(+)(out) = Na(+)(out) + 2 H(+)(in). Its function is as follows. Na(+)/H(+) antiporter that extrudes sodium in exchange for external protons. The chain is Na(+)/H(+) antiporter NhaA from Brucella abortus (strain 2308).